Consider the following 188-residue polypeptide: Protein ORFV073 (188 aa).

Interacts with host IKBKG; this interaction inhibits host NF-kappa-B pathway activation.

It localises to the host nucleus. It is found in the host cytoplasm. The protein resides in the host perinuclear region. Its subcellular location is the virion. Functionally, plays a role in the inhibition of the host NF-kappa-B pathway early during infection. Prevents the host RELA subunit from reaching the nucleus and activate transcription. The polypeptide is Protein ORFV073 (Capra hircus (Goat)).